Here is a 483-residue protein sequence, read N- to C-terminus: ATP synthase subunit beta (483 aa).

Residue 162 to 169 (GGAGVGKT) participates in ATP binding.

This sequence belongs to the ATPase alpha/beta chains family. In terms of assembly, F-type ATPases have 2 components, CF(1) - the catalytic core - and CF(0) - the membrane proton channel. CF(1) has five subunits: alpha(3), beta(3), gamma(1), delta(1), epsilon(1). CF(0) has four main subunits: a(1), b(1), b'(1) and c(9-12).

The protein resides in the cellular thylakoid membrane. The catalysed reaction is ATP + H2O + 4 H(+)(in) = ADP + phosphate + 5 H(+)(out). Functionally, produces ATP from ADP in the presence of a proton gradient across the membrane. The catalytic sites are hosted primarily by the beta subunits. The polypeptide is ATP synthase subunit beta (Rippkaea orientalis (strain PCC 8801 / RF-1) (Cyanothece sp. (strain PCC 8801))).